Consider the following 140-residue polypeptide: Ribosome maturation factor RimP (140 aa).

Belongs to the RimP family.

The protein resides in the cytoplasm. Functionally, required for maturation of 30S ribosomal subunits. The sequence is that of Ribosome maturation factor RimP from Campylobacter jejuni subsp. jejuni serotype O:6 (strain 81116 / NCTC 11828).